Consider the following 376-residue polypeptide: Hydroxylysine kinase (376 aa).

Asp-229 serves as the catalytic Proton acceptor.

This sequence belongs to the aminoglycoside phosphotransferase family.

It localises to the cytoplasm. It carries out the reaction (5R)-5-hydroxy-L-lysine + GTP = (5R)-5-phosphooxy-L-lysine + GDP + H(+). Its function is as follows. Catalyzes the GTP-dependent phosphorylation of 5-hydroxy-L-lysine. This Bos taurus (Bovine) protein is Hydroxylysine kinase (HYKK).